The sequence spans 272 residues: Cytosolic Fe-S cluster assembly factor NUBP2 (272 aa).

Residue Gly-23–Ser-30 coordinates ATP. Residues Cys-197 and Cys-200 each contribute to the [4Fe-4S] cluster site.

This sequence belongs to the Mrp/NBP35 ATP-binding proteins family. NUBP2/CFD1 subfamily. In terms of assembly, heterotetramer of 2 NUBP1 and 2 NUBP2 chains. [4Fe-4S] cluster serves as cofactor.

It localises to the cytoplasm. In terms of biological role, component of the cytosolic iron-sulfur (Fe/S) protein assembly (CIA) machinery. Required for maturation of extramitochondrial Fe-S proteins. The NUBP1-NUBP2 heterotetramer forms a Fe-S scaffold complex, mediating the de novo assembly of an Fe-S cluster and its transfer to target apoproteins. The polypeptide is Cytosolic Fe-S cluster assembly factor NUBP2 (Gallus gallus (Chicken)).